A 264-amino-acid chain; its full sequence is Thymidylate synthase (264 aa).

Position 21 (arginine 21) interacts with dUMP. Histidine 51 provides a ligand contact to (6R)-5,10-methylene-5,6,7,8-tetrahydrofolate. 126–127 serves as a coordination point for dUMP; it reads RR. Residue cysteine 146 is the Nucleophile of the active site. DUMP contacts are provided by residues 166 to 169, asparagine 177, and 207 to 209; these read RSAD and HLY. (6R)-5,10-methylene-5,6,7,8-tetrahydrofolate is bound at residue aspartate 169. Alanine 263 lines the (6R)-5,10-methylene-5,6,7,8-tetrahydrofolate pocket.

This sequence belongs to the thymidylate synthase family. Bacterial-type ThyA subfamily. In terms of assembly, homodimer.

It is found in the cytoplasm. It catalyses the reaction dUMP + (6R)-5,10-methylene-5,6,7,8-tetrahydrofolate = 7,8-dihydrofolate + dTMP. The protein operates within pyrimidine metabolism; dTTP biosynthesis. In terms of biological role, catalyzes the reductive methylation of 2'-deoxyuridine-5'-monophosphate (dUMP) to 2'-deoxythymidine-5'-monophosphate (dTMP) while utilizing 5,10-methylenetetrahydrofolate (mTHF) as the methyl donor and reductant in the reaction, yielding dihydrofolate (DHF) as a by-product. This enzymatic reaction provides an intracellular de novo source of dTMP, an essential precursor for DNA biosynthesis. In Rhizobium etli (strain ATCC 51251 / DSM 11541 / JCM 21823 / NBRC 15573 / CFN 42), this protein is Thymidylate synthase.